We begin with the raw amino-acid sequence, 147 residues long: MNNILVINGPNLNLLGKREPDIYGNITLENINQKIKLHFKNEDLRIDFFQSNEEGKIIDRIIESEKKYNAIVINPAAYSHYSIAILDAMRSINIPVVEVHLSNIYKREEYRKKSVTAEASLGVISGFGYYGYIMAIEFILNNLSIGK.

Tyr-23 functions as the Proton acceptor in the catalytic mechanism. Residues Asn-74, His-80, and Asp-87 each contribute to the substrate site. His-100 functions as the Proton donor in the catalytic mechanism. Residues 101–102 (LS) and Arg-111 contribute to the substrate site.

This sequence belongs to the type-II 3-dehydroquinase family. In terms of assembly, homododecamer.

It carries out the reaction 3-dehydroquinate = 3-dehydroshikimate + H2O. It participates in metabolic intermediate biosynthesis; chorismate biosynthesis; chorismate from D-erythrose 4-phosphate and phosphoenolpyruvate: step 3/7. In terms of biological role, catalyzes a trans-dehydration via an enolate intermediate. The polypeptide is 3-dehydroquinate dehydratase (Clostridium botulinum (strain Loch Maree / Type A3)).